A 571-amino-acid polypeptide reads, in one-letter code: MTQPGQTTTTSHEAIDAFKRIVGDEHVLTSERATMPFSKGYRFGGGPVFAVVRPGTLVEMWRALQVSVDNNLIVIPQASNTGLTGGSGPGFQDYDRPIVIISTHRIDEVHLINDAREAISLAGTPLTHLTDALAKHQREPHSVIGSTSIGASVIGGIANNSGGSQIRKGPAFTREAIFARVNDDGKVELVNHLGISLGDDPEVALDRLQRGEWSPEDVTPAPEDSNETEYAEHLRKIVPSPARYNANPEYLFEASGSAGKLMVFAVRTRTFPREVHPTVFYIGTNNTHELEEIRRLFLEADMPLPISGEYMGRSAFDLAEKYGKDTFVFLKFMSPALQTRMFSFKTWANGLFSKIPGIGPTFADTVSQAMFSVLPNQLPKRMMEYRNRFEHHLLLTVSESQKAASEKMLKEFFAEPEHTGEFFICTSDEEKSASLNRFGAASAATRYAALKRRHIAGLIPIDVALRRDDWNWLEVLPEEIDDQLEVKAYYGHFFCHVMHQDYVAKQGVDLEALHDRIQHLLEERGAKLPAEHNYGRIYKLPESMEEHFKELDPTNTFNAGIGGTSPHKDWA.

Residues 44-273 (GGGPVFAVVR…FAVRTRTFPR (230 aa)) form the FAD-binding PCMH-type domain. Residues 78-82 (ASNTG), 86-87 (GS), Gly145, Ser152, Gly162, and Val263 each bind FAD.

Belongs to the quinone-dependent D-lactate dehydrogenase family. The cofactor is FAD.

Its subcellular location is the cell membrane. It carries out the reaction (R)-lactate + a quinone = a quinol + pyruvate. Catalyzes the oxidation of D-lactate to pyruvate. Also has weak activity with L-lactate and DL-2-hydroxybutyrate. Electrons derived from D-lactate oxidation enter the electron transport chain. Essential for growth with D-lactate as sole carbon and energy source. The sequence is that of Quinone-dependent D-lactate dehydrogenase from Corynebacterium glutamicum (strain ATCC 13032 / DSM 20300 / JCM 1318 / BCRC 11384 / CCUG 27702 / LMG 3730 / NBRC 12168 / NCIMB 10025 / NRRL B-2784 / 534).